A 500-amino-acid polypeptide reads, in one-letter code: Zinc finger protein ENHYDROUS (500 aa).

A disordered region spans residues 1-42 (MPVDLDNSSTVSGDASVSSTGNQNLTPKSVGKKKRNLPGMPD). The span at 8 to 21 (SSTVSGDASVSSTG) shows a compositional bias: low complexity. Phosphoserine is present on Ser-51. 2 consecutive C2H2-type zinc fingers follow at residues 61-83 (FVCEICNKGFQRDQNLQLHRRGH) and 102-132 (YVCPVSGCVHHDPSRALGDLTGIKKHFCRKH). The Nuclear localization signal signature appears at 124 to 131 (IKKHFCRK). The segment at 137–160 (WKCEKCSKKYAVQSDWKAHSKICG) adopts a C2H2-type 2; degenerate zinc-finger fold. The Zn(2+) site is built by Cys-139, Cys-142, His-155, Cys-159, Cys-166, Cys-168, His-181, and Cys-185. The CCHC-type 2; atypical zinc finger occupies 164-187 (YKCDCGTLFSRRDSFITHRAFCDA). An SHR-binding region spans residues 174-186 (RRDSFITHRAFCD). The disordered stretch occupies residues 196 to 236 (HTQSKKLYPETVTRKNPEIEQKSPAAVESSPSLPPSSPPSV). Residues 207 to 216 (VTRKNPEIEQ) show a composition bias toward basic and acidic residues.

As to quaternary structure, interacts with the DELLA proteins (e.g. GAI/RGA2, RGA, RGL1, RGL2 and RGLG3), acting as coactivators. In terms of tissue distribution, at 3 days post anthesis (DPA), expressed in the chalazal endosperm region. By 6 DPA, expressed in the endosperm and embryo. In fully germinated seed, strongest expression in the root tip and not detected in the cotyledons. In 4-days old seedlings, restricted to the vasculature of the cotyledons, the shoot apical meristem region, and the root tip. By 8 days, restricted to newly emerged leaves.

It is found in the nucleus. Functionally, transcription factor promoting the transition to germination by regulating light and hormonal signaling during seed maturation. Acts as a positive regulator of phytochrome and/or gibberellin action. This chain is Zinc finger protein ENHYDROUS, found in Arabidopsis thaliana (Mouse-ear cress).